The primary structure comprises 448 residues: Exodeoxyribonuclease 7 large subunit (448 aa).

The protein belongs to the XseA family. In terms of assembly, heterooligomer composed of large and small subunits.

It is found in the cytoplasm. It carries out the reaction Exonucleolytic cleavage in either 5'- to 3'- or 3'- to 5'-direction to yield nucleoside 5'-phosphates.. Bidirectionally degrades single-stranded DNA into large acid-insoluble oligonucleotides, which are then degraded further into small acid-soluble oligonucleotides. In Nitrosomonas europaea (strain ATCC 19718 / CIP 103999 / KCTC 2705 / NBRC 14298), this protein is Exodeoxyribonuclease 7 large subunit.